A 173-amino-acid chain; its full sequence is C-phycocyanin-2 beta subunit (173 aa).

Asn73 is modified (N4-methylasparagine). Residues Cys83 and Cys154 each coordinate (2R,3E)-phycocyanobilin.

Belongs to the phycobiliprotein family. In terms of assembly, heterodimer of an alpha and a beta subunit, which further assembles into trimers and the trimers into hexamers. In terms of processing, contains two covalently linked bilin chromophores.

It localises to the cellular thylakoid membrane. In terms of biological role, light-harvesting photosynthetic bile pigment-protein from the phycobiliprotein complex (phycobilisome, PBS). Phycocyanin is the major phycobiliprotein in the PBS rod. The protein is C-phycocyanin-2 beta subunit (cpcB2) of Synechococcus sp. (strain ATCC 27144 / PCC 6301 / SAUG 1402/1) (Anacystis nidulans).